The primary structure comprises 313 residues: Isoaspartyl peptidase (313 aa).

The Nucleophile role is filled by Thr179. Residues 207–210 and 230–233 contribute to the substrate site; these read RVGD and TGTG.

It belongs to the Ntn-hydrolase family. Heterotetramer of two alpha and two beta chains arranged as a dimer of alpha/beta heterodimers. In terms of processing, autocleaved. Generates the alpha and beta subunits. The beta subunit is thought to be responsible for the nucleophile hydrolase activity.

The catalysed reaction is Cleavage of a beta-linked Asp residue from the N-terminus of a polypeptide.. Degrades proteins damaged by L-isoaspartyl residue formation (also known as beta-Asp residues). Degrades L-isoaspartyl-containing di- and tripeptides. Acts best on iso-Asp-Leu, followed by iso-Asp-Ala, -His and to a lesser extent iso-Asp-Lys, -Phe and iso-Asp-Leu-Ala. Does not act on internal iso-Asp bonds (Als-iso-Asp-Leu-Ala). Does not act on alpha-Asp bonds. Has poor L-asparaginase activity. This Salmonella typhimurium (strain LT2 / SGSC1412 / ATCC 700720) protein is Isoaspartyl peptidase (iaaA).